We begin with the raw amino-acid sequence, 96 residues long: Large ribosomal subunit protein bL28 (96 aa).

Residues M1–N22 show a composition bias toward polar residues. The disordered stretch occupies residues M1–K24.

Belongs to the bacterial ribosomal protein bL28 family.

This is Large ribosomal subunit protein bL28 from Sinorhizobium medicae (strain WSM419) (Ensifer medicae).